A 116-amino-acid polypeptide reads, in one-letter code: Iron-sulfur cluster insertion protein ErpA (116 aa).

Positions 44, 108, and 110 each coordinate iron-sulfur cluster.

This sequence belongs to the HesB/IscA family. As to quaternary structure, homodimer. Iron-sulfur cluster serves as cofactor.

Its function is as follows. Required for insertion of 4Fe-4S clusters for at least IspG. This chain is Iron-sulfur cluster insertion protein ErpA, found in Stutzerimonas stutzeri (strain A1501) (Pseudomonas stutzeri).